Reading from the N-terminus, the 342-residue chain is Transmembrane protein 115 homolog (342 aa).

The Cytoplasmic portion of the chain corresponds to 1–21 (MQYSSRFLELNIPDSFLNINK). The chain crosses the membrane as a helical span at residues 22–42 (IPDATKFITVTYICLTATLFC). At 43–121 (IRRSLYNKLV…NWNSSKEMFK (79 aa)) the chain is on the lumenal side. A glycan (N-linked (GlcNAc...) asparagine) is linked at N114. The chain crosses the membrane as a helical span at residues 122–142 (FIIVLGSLTNVLIIMLTLLVS). Over 143 to 159 (FFSNKVRLDIPLDGNYT) the chain is Cytoplasmic. Residues 160 to 180 (ILIGFPIIYRQLLPETTIIHL) traverse the membrane as a helical segment. The Lumenal portion of the chain corresponds to 181–207 (KTPQFLAKNFRFKLLPIFVMFTMTVTQ). The chain crosses the membrane as a helical span at residues 208-228 (IIWFHHFAQLFSIWVTFFASW). Topologically, residues 229–342 (SYLRFFQKLA…QVLEERMVNP (114 aa)) are cytoplasmic.

This sequence belongs to the TMEM115 family. Homooligomer.

Its subcellular location is the golgi apparatus membrane. Functionally, may play a role in retrograde transport of proteins from the Golgi to the endoplasmic reticulum. The chain is Transmembrane protein 115 homolog from Saccharomyces cerevisiae (strain ATCC 204508 / S288c) (Baker's yeast).